A 161-amino-acid chain; its full sequence is Type IV major fimbrial protein FimA (161 aa).

The propeptide at 1–7 (MKSLQKG) is leader sequence. Position 8 is an N-methylphenylalanine (Phe8). A helical membrane pass occupies residues 8 to 28 (FTLIELMIVVAIIGILAAFAI). Cysteines 63 and 105 form a disulfide.

Belongs to the N-Me-Phe pilin family. In terms of assembly, the pili are polar flexible filaments of about 5.4 nanometers diameter and 2.5 micrometers average length; they consist of only a single polypeptide chain arranged in a helical configuration of five subunits per turn in the assembled pilus.

The protein localises to the fimbrium. Its subcellular location is the membrane. Its function is as follows. Major component of the type IV fimbriae that plays an essential role in twitching motility, natural transformation, and protease secretion. The sequence is that of Type IV major fimbrial protein FimA (fimA) from Dichelobacter nodosus (Bacteroides nodosus).